Consider the following 175-residue polypeptide: Ribosome maturation factor RimM (175 aa).

Residues Glu97–Phe175 form the PRC barrel domain.

It belongs to the RimM family. Binds ribosomal protein uS19.

It localises to the cytoplasm. In terms of biological role, an accessory protein needed during the final step in the assembly of 30S ribosomal subunit, possibly for assembly of the head region. Essential for efficient processing of 16S rRNA. May be needed both before and after RbfA during the maturation of 16S rRNA. It has affinity for free ribosomal 30S subunits but not for 70S ribosomes. This Marinobacter nauticus (strain ATCC 700491 / DSM 11845 / VT8) (Marinobacter aquaeolei) protein is Ribosome maturation factor RimM.